Consider the following 544-residue polypeptide: Chaperonin GroEL (544 aa).

Residues 30-33, lysine 51, 87-91, glycine 415, 479-481, and aspartate 495 each bind ATP; these read TLGP, DGTTT, and NAA.

The protein belongs to the chaperonin (HSP60) family. In terms of assembly, forms a cylinder of 14 subunits composed of two heptameric rings stacked back-to-back. Interacts with the co-chaperonin GroES.

The protein resides in the cytoplasm. The catalysed reaction is ATP + H2O + a folded polypeptide = ADP + phosphate + an unfolded polypeptide.. Together with its co-chaperonin GroES, plays an essential role in assisting protein folding. The GroEL-GroES system forms a nano-cage that allows encapsulation of the non-native substrate proteins and provides a physical environment optimized to promote and accelerate protein folding. The protein is Chaperonin GroEL of Francisella tularensis subsp. mediasiatica (strain FSC147).